The sequence spans 264 residues: Type III pantothenate kinase (264 aa).

6–13 (DVRNTSIE) contacts ATP. 109–112 (GADR) contacts substrate. The active-site Proton acceptor is the Asp111. Asp131 lines the K(+) pocket. ATP is bound at residue Thr134. Thr185 serves as a coordination point for substrate.

The protein belongs to the type III pantothenate kinase family. As to quaternary structure, homodimer. Requires NH4(+) as cofactor. The cofactor is K(+).

The protein localises to the cytoplasm. It catalyses the reaction (R)-pantothenate + ATP = (R)-4'-phosphopantothenate + ADP + H(+). Its pathway is cofactor biosynthesis; coenzyme A biosynthesis; CoA from (R)-pantothenate: step 1/5. Functionally, catalyzes the phosphorylation of pantothenate (Pan), the first step in CoA biosynthesis. In Nocardia farcinica (strain IFM 10152), this protein is Type III pantothenate kinase.